The primary structure comprises 274 residues: NH(3)-dependent NAD(+) synthetase (274 aa).

G46–S53 serves as a coordination point for ATP. Residue D52 participates in Mg(2+) binding. R140 is a binding site for deamido-NAD(+). T160 contacts ATP. E165 is a binding site for Mg(2+). Deamido-NAD(+) contacts are provided by K173 and D180. ATP-binding residues include K189 and T211. H260 to K261 serves as a coordination point for deamido-NAD(+).

This sequence belongs to the NAD synthetase family. In terms of assembly, homodimer.

It carries out the reaction deamido-NAD(+) + NH4(+) + ATP = AMP + diphosphate + NAD(+) + H(+). It functions in the pathway cofactor biosynthesis; NAD(+) biosynthesis; NAD(+) from deamido-NAD(+) (ammonia route): step 1/1. Functionally, catalyzes the ATP-dependent amidation of deamido-NAD to form NAD. Uses ammonia as a nitrogen source. This Streptococcus pneumoniae serotype 19F (strain G54) protein is NH(3)-dependent NAD(+) synthetase.